Reading from the N-terminus, the 635-residue chain is Threonine--tRNA ligase (635 aa).

Positions 1–61 constitute a TGS domain; that stretch reads MVSIRLPDGS…DHDVALAIVT (61 aa). The segment at 242 to 533 is catalytic; the sequence is DHRKLGKQLD…LIEHHAGAMP (292 aa). Cysteine 333, histidine 384, and histidine 510 together coordinate Zn(2+).

It belongs to the class-II aminoacyl-tRNA synthetase family. In terms of assembly, homodimer. Zn(2+) is required as a cofactor.

Its subcellular location is the cytoplasm. It carries out the reaction tRNA(Thr) + L-threonine + ATP = L-threonyl-tRNA(Thr) + AMP + diphosphate + H(+). Its function is as follows. Catalyzes the attachment of threonine to tRNA(Thr) in a two-step reaction: L-threonine is first activated by ATP to form Thr-AMP and then transferred to the acceptor end of tRNA(Thr). Also edits incorrectly charged L-seryl-tRNA(Thr). This is Threonine--tRNA ligase from Paraburkholderia phymatum (strain DSM 17167 / CIP 108236 / LMG 21445 / STM815) (Burkholderia phymatum).